Consider the following 236-residue polypeptide: UPF0177 protein YaiH (236 aa).

A run of 6 helical transmembrane segments spans residues Tyr16–Tyr36, Ala51–Ile71, Ile90–Tyr110, Ile131–Ala151, Thr180–Tyr200, and Ile210–Ile230.

It belongs to the UPF0177 family.

It localises to the cell membrane. This is UPF0177 protein YaiH (yaiH) from Lactococcus lactis subsp. lactis (strain IL1403) (Streptococcus lactis).